We begin with the raw amino-acid sequence, 397 residues long: 1-deoxy-D-xylulose 5-phosphate reductoisomerase (397 aa).

The NADPH site is built by Thr10, Gly11, Ser12, Ile13, Gln38, and Asn123. Position 124 (Lys124) interacts with 1-deoxy-D-xylulose 5-phosphate. NADPH is bound at residue Glu125. Asp149 contributes to the Mn(2+) binding site. Positions 150, 151, 185, and 208 each coordinate 1-deoxy-D-xylulose 5-phosphate. A Mn(2+)-binding site is contributed by Glu151. NADPH is bound at residue Gly214. Ser221, Asn226, Lys227, and Glu230 together coordinate 1-deoxy-D-xylulose 5-phosphate. Glu230 is a Mn(2+) binding site.

This sequence belongs to the DXR family. It depends on Mg(2+) as a cofactor. The cofactor is Mn(2+).

It catalyses the reaction 2-C-methyl-D-erythritol 4-phosphate + NADP(+) = 1-deoxy-D-xylulose 5-phosphate + NADPH + H(+). It functions in the pathway isoprenoid biosynthesis; isopentenyl diphosphate biosynthesis via DXP pathway; isopentenyl diphosphate from 1-deoxy-D-xylulose 5-phosphate: step 1/6. Its function is as follows. Catalyzes the NADPH-dependent rearrangement and reduction of 1-deoxy-D-xylulose-5-phosphate (DXP) to 2-C-methyl-D-erythritol 4-phosphate (MEP). This chain is 1-deoxy-D-xylulose 5-phosphate reductoisomerase, found in Idiomarina loihiensis (strain ATCC BAA-735 / DSM 15497 / L2-TR).